A 75-amino-acid chain; its full sequence is UPF0270 protein Pfl01_4103 (75 aa).

The protein belongs to the UPF0270 family.

This Pseudomonas fluorescens (strain Pf0-1) protein is UPF0270 protein Pfl01_4103.